The primary structure comprises 270 residues: NAD kinase (270 aa).

Aspartate 63 serves as the catalytic Proton acceptor. NAD(+) contacts are provided by residues 63 to 64 (DG), arginine 68, 131 to 132 (NE), lysine 142, arginine 159, aspartate 161, 172 to 177 (TAYAMS), alanine 196, and glutamine 230.

The protein belongs to the NAD kinase family. The cofactor is a divalent metal cation.

Its subcellular location is the cytoplasm. It catalyses the reaction NAD(+) + ATP = ADP + NADP(+) + H(+). Involved in the regulation of the intracellular balance of NAD and NADP, and is a key enzyme in the biosynthesis of NADP. Catalyzes specifically the phosphorylation on 2'-hydroxyl of the adenosine moiety of NAD to yield NADP. This chain is NAD kinase, found in Methanoregula boonei (strain DSM 21154 / JCM 14090 / 6A8).